The primary structure comprises 240 residues: Lectin (240 aa).

Positions 127 and 129 each coordinate Mn(2+). D129, Y131, N133, and D138 together coordinate Ca(2+). D138 and H143 together coordinate Mn(2+).

Belongs to the leguminous lectin family. In terms of assembly, heterotetramer of two alpha and two beta chains; disulfide bond linked.

Its function is as follows. Binds preferentially to oligosaccharides bearing the sequence Man-alpha-1-&gt;2 Man-alpha-1-&gt;6 Man-alpha-1-&gt;6Man found in early steps of glycoprotein processing in the endoplasmic reticulum. It binds weakly to highly processed oligosaccharide structures. This Leucomphalos mildbraedii (Bowringia mildbraedii) protein is Lectin.